The sequence spans 489 residues: Beta-galactosidase (489 aa).

Lys-116 is subject to N6-methyllysine; partial. Lys-135 is modified (N6-methyllysine). Glu-206 (proton donor) is an active-site residue. Lys-273 and Lys-311 each carry N6-methyllysine; partial. Lys-332 carries the N6-methyllysine modification. Glu-387 acts as the Nucleophile in catalysis.

In terms of assembly, homotetramer.

It catalyses the reaction Hydrolysis of terminal non-reducing beta-D-galactose residues in beta-D-galactosides.. This chain is Beta-galactosidase (lacS), found in Saccharolobus solfataricus (strain ATCC 35092 / DSM 1617 / JCM 11322 / P2) (Sulfolobus solfataricus).